We begin with the raw amino-acid sequence, 76 residues long: uncharacterized protein (76 aa).

This sequence belongs to the IIV-6 342R family.

This is an uncharacterized protein from Invertebrate iridescent virus 3 (IIV-3).